Reading from the N-terminus, the 226-residue chain is Cytidylate kinase (226 aa).

10–18 is an ATP binding site; it reads GPASSGKST.

This sequence belongs to the cytidylate kinase family. Type 1 subfamily.

Its subcellular location is the cytoplasm. The enzyme catalyses CMP + ATP = CDP + ADP. It catalyses the reaction dCMP + ATP = dCDP + ADP. The chain is Cytidylate kinase from Streptococcus pyogenes serotype M5 (strain Manfredo).